We begin with the raw amino-acid sequence, 327 residues long: MQIKRSIEKIPGGMMLVPLFLGALCHTFSPGAGKYFGSFTNGMITGTVPILAVWFFCMGASIKLSATGTVLRKSGTLVVTKIAVAWVVAAIASRIIPEHGVEVGFFAGLSTLALVAAMDMTNGGLYASIMQQYGTKEEAGAFVLMSLESGPLMTMIILGTAGIASFEPHVFVGAVLPFLVGFALGNLDPELREFFSKAVQTLIPFFAFALGNTIDLTVIAQTGLLGILLGVAVIIVTGIPLIIADKLIGGGDGTAGIAASSSAGAAVATPVLIAEMVPAFKPMAPAATSLVATAVIVTSILVPILTSIWSRKVKARAAKIEILGTVK.

10 helical membrane-spanning segments follow: residues 10 to 30 (IPGG…TFSP), 42 to 62 (GMIT…GASI), 73 to 93 (KSGT…AIAS), 95 to 115 (IIPE…LALV), 139 to 159 (AGAF…IILG), 163 to 183 (IASF…VGFA), 199 to 219 (VQTL…LTVI), 224 to 244 (LLGI…LIIA), 254 to 274 (TAGI…VLIA), and 289 to 309 (SLVA…TSIW).

Belongs to the KdgT transporter family.

Its subcellular location is the cell inner membrane. It catalyses the reaction 2-dehydro-3-deoxy-D-gluconate(in) + H(+)(in) = 2-dehydro-3-deoxy-D-gluconate(out) + H(+)(out). Catalyzes the proton-dependent uptake of 2-keto-3-deoxygluconate (KDG) into the cell. The sequence is that of 2-keto-3-deoxygluconate permease from Escherichia coli O127:H6 (strain E2348/69 / EPEC).